The chain runs to 384 residues: Magnesium transporter MRS2-I (384 aa).

2 consecutive transmembrane segments (helical) span residues 319–339 (LFLSSGTVCLSLYSLVAGIFG) and 356–376 (WVVLVSGLFCAFMFVSIVAYA). The short motif at 339–341 (GMN) is the Required for magnesium transport activity element.

It belongs to the CorA metal ion transporter (MIT) (TC 1.A.35.5) family.

Its subcellular location is the membrane. Magnesium transporter that may mediate the influx of magnesium. This is Magnesium transporter MRS2-I (MRS2-I) from Oryza sativa subsp. japonica (Rice).